The sequence spans 97 residues: Small nuclear ribonucleoprotein Sm D3 (97 aa).

Positions 3–75 (LCIKLLHETQ…IRFLIVPDML (73 aa)) constitute a Sm domain.

The protein belongs to the snRNP core protein family. As to quaternary structure, belongs to the 40S cdc5-associated complex (or cwf complex), a spliceosome sub-complex reminiscent of a late-stage spliceosome composed of the U2, U5 and U6 snRNAs and at least brr2, cdc5, cwf2/prp3, cwf3/syf1, cwf4/syf3, cwf5/ecm2, spp42/cwf6, cwf7/spf27, cwf8, cwf9, cwf10, cwf11, cwf12, prp45/cwf13, cwf14, cwf15, cwf16, cwf17, cwf18, cwf19, cwf20, cwf21, cwf22, cwf23, cwf24, cwf25, cwf26, cyp7/cwf27, cwf28, cwf29/ist3, lea1, msl1, prp5/cwf1, prp10, prp12/sap130, prp17, prp22, sap61, sap62, sap114, sap145, slu7, smb1, smd1, smd3, smf1, smg1 and syf2. Interacts with saf5; the interaction is direct.

It is found in the nucleus. The protein localises to the cytoplasm. The protein resides in the cytosol. Its function is as follows. Plays a role in pre-mRNA splicing as a core component of the spliceosomal U1, U2, U4 and U5 small nuclear ribonucleoproteins (snRNPs), the building blocks of the spliceosome. The sequence is that of Small nuclear ribonucleoprotein Sm D3 (smd3) from Schizosaccharomyces pombe (strain 972 / ATCC 24843) (Fission yeast).